Consider the following 470-residue polypeptide: Glutamate--tRNA ligase 1 (470 aa).

A 'HIGH' region motif is present at residues 8–18 (PSPTGYLHVGG). The short motif at 250–254 (KLSKR) is the 'KMSKS' region element. Lysine 253 contributes to the ATP binding site.

Belongs to the class-I aminoacyl-tRNA synthetase family. Glutamate--tRNA ligase type 1 subfamily. Monomer.

It localises to the cytoplasm. It catalyses the reaction tRNA(Glu) + L-glutamate + ATP = L-glutamyl-tRNA(Glu) + AMP + diphosphate. Catalyzes the attachment of glutamate to tRNA(Glu) in a two-step reaction: glutamate is first activated by ATP to form Glu-AMP and then transferred to the acceptor end of tRNA(Glu). The sequence is that of Glutamate--tRNA ligase 1 from Pseudothermotoga lettingae (strain ATCC BAA-301 / DSM 14385 / NBRC 107922 / TMO) (Thermotoga lettingae).